The chain runs to 90 residues: UPF0298 protein SSU98_1559 (90 aa).

Belongs to the UPF0298 family.

Its subcellular location is the cytoplasm. This Streptococcus suis (strain 98HAH33) protein is UPF0298 protein SSU98_1559.